A 134-amino-acid chain; its full sequence is Small ribosomal subunit protein uS9 (134 aa).

This sequence belongs to the universal ribosomal protein uS9 family.

This chain is Small ribosomal subunit protein uS9, found in Pseudothermotoga lettingae (strain ATCC BAA-301 / DSM 14385 / NBRC 107922 / TMO) (Thermotoga lettingae).